A 229-amino-acid chain; its full sequence is PKHD-type hydroxylase Rpal_3968 (229 aa).

The Fe2OG dioxygenase domain maps to 78-180 (QIFPPLFNRY…RVASFFWLQS (103 aa)). The Fe cation site is built by His-98, Asp-100, and His-161. Residue Arg-171 participates in 2-oxoglutarate binding.

The cofactor is Fe(2+). Requires L-ascorbate as cofactor.

The protein is PKHD-type hydroxylase Rpal_3968 of Rhodopseudomonas palustris (strain TIE-1).